A 342-amino-acid polypeptide reads, in one-letter code: MSAWASQEAAKEEEAVGDFARMLERRDAGLLARVLSRAQTGPEAYVRGLWRAEVGLERWRLTRVLGCGSVACVFELGDGALALKVPTSRRKAPVLLHEVLIYSHLAQQAGGRLAERHVVPFHGVAAVTRREYRRLRGGEVVPALVLERMDTTLEAVHRRAAVSKGQWWRYARDLVAALQFLRESCVVHGDIKTANVLVRGQDAFLADFTSAAVCDAAPEPLTTTLEYCAPGLIGGGQPTHSTDVYAAGLCLLALITRFEPFRELSMMKSHSSAPTHSLHETQWLMNAISKGDPIKYNVLSQDLYDRWAEELHFLRRFFVPAAQDALSRWLAESNARVAEHAF.

Positions Trp59 to Phe342 constitute a Protein kinase domain. ATP-binding positions include Leu65–Val73 and Lys84. Asp190 (proton acceptor) is an active-site residue.

Belongs to the protein kinase superfamily. Ser/Thr protein kinase family.

The enzyme catalyses L-seryl-[protein] + ATP = O-phospho-L-seryl-[protein] + ADP + H(+). It catalyses the reaction L-threonyl-[protein] + ATP = O-phospho-L-threonyl-[protein] + ADP + H(+). Functionally, probable serine/threonine protein kinase which may function redundantly with MPK1-independent branch of the PCK1 pathway. This chain is Serine/threonine-protein kinase ISR1 (ISR1), found in Eremothecium gossypii (strain ATCC 10895 / CBS 109.51 / FGSC 9923 / NRRL Y-1056) (Yeast).